A 473-amino-acid chain; its full sequence is Dol-P-Glc:Glc(2)Man(9)GlcNAc(2)-PP-Dol alpha-1,2-glucosyltransferase (473 aa).

The Cytoplasmic segment spans residues 1–6; the sequence is MAQLEG. Residues 7–27 form a helical membrane-spanning segment; the sequence is YCFSAALSCTFLVSCLLFSAF. The Extracellular segment spans residues 28 to 64; the sequence is SRALREPYMDEIFHLPQAQRYCEGHFSLSQWDPMITT. The chain crosses the membrane as a helical span at residues 65–85; sequence LPGLYLVSVGVVKPAIWIFAW. Residues 86–97 lie on the Cytoplasmic side of the membrane; it reads SEHVVCSIGMLR. Residues 98 to 118 traverse the membrane as a helical segment; that stretch reads FVNLLFSVGNFYLLYLLFHKV. At 119–126 the chain is on the extracellular side; that stretch reads QPRNKAAS. Residues 127–147 form a helical membrane-spanning segment; it reads SIQRVLSTLTLAVFPTLYFFN. Residues 148–150 are Cytoplasmic-facing; sequence FLY. A helical membrane pass occupies residues 151–171; it reads YTEAGSMFFTLFAYLMCLYGN. Topologically, residues 172-175 are extracellular; it reads HKTS. A helical transmembrane segment spans residues 176–196; the sequence is AFLGFCGFMFRQTNIIWAVFC. At 197–256 the chain is on the cytoplasmic side; that stretch reads AGNVIAQKLTEAWKTELQKKEDRLPPIKGPFAEFRKILQFLLAYSMSFKNLSMLFCLTWP. A helical transmembrane segment spans residues 257 to 277; that stretch reads YILLGFLFCAFVVVNGGIVIG. The Extracellular segment spans residues 278-283; it reads DRSSHE. The helical transmembrane segment at 284–304 threads the bilayer; that stretch reads ACLHFPQLFYFFSFTLFFSFP. The Cytoplasmic segment spans residues 305-317; it reads HLLSPSKIKTFLS. Residues 318 to 338 traverse the membrane as a helical segment; it reads LVWKHGILFLVVTLVSVFLVW. The Extracellular portion of the chain corresponds to 339-365; the sequence is KFTYAHKYLLADNRHYTFYVWKRVFQR. A helical membrane pass occupies residues 366-386; the sequence is YAILKYLLVPAYIFAGWSIAD. Residues 387–392 lie on the Cytoplasmic side of the membrane; it reads SLKSKP. The chain crosses the membrane as a helical span at residues 393–413; it reads IFWNLMFFICLFIVIVPQKLL. The Extracellular portion of the chain corresponds to 414–436; that stretch reads EFRYFILPYVIYRLNITLPPTSR. The helical transmembrane segment at 437–457 threads the bilayer; that stretch reads LVCELSCYAIVNFITFYIFLN. Residues 458 to 473 lie on the Cytoplasmic side of the membrane; sequence KTFQWPNSQDIQRFMW.

The protein belongs to the ALG10 glucosyltransferase family. As to quaternary structure, interacts with KCNH1; may regulate KCNH1, possibly by regulating its N-glycosylation. Interacts with KCNH2; may reduce KCNH2 sensitivity to classic proarrhythmic drug blockade, possibly by regulating its N-glycosylation. As to expression, highly expressed in heart, placenta, liver, kidney and pancreas. Weakly expressed in lung, skeletal muscle and brain.

The protein resides in the endoplasmic reticulum membrane. The enzyme catalyses an alpha-D-Glc-(1-&gt;3)-alpha-D-Glc-(1-&gt;3)-alpha-D-Man-(1-&gt;2)-alpha-D-Man-(1-&gt;2)-alpha-D-Man-(1-&gt;3)-[alpha-D-Man-(1-&gt;2)-alpha-D-Man-(1-&gt;3)-[alpha-D-Man-(1-&gt;2)-alpha-D-Man-(1-&gt;6)]-alpha-D-Man-(1-&gt;6)]-beta-D-Man-(1-&gt;4)-beta-D-GlcNAc-(1-&gt;4)-alpha-D-GlcNAc-diphospho-di-trans,poly-cis-dolichol + a di-trans,poly-cis-dolichyl beta-D-glucosyl phosphate = a alpha-D-Glc-(1-&gt;2)-alpha-D-Glc-(1-&gt;3)-alpha-D-Glc-(1-&gt;3)-alpha-D-Man-(1-&gt;2)-alpha-D-Man-(1-&gt;2)-alpha-D-Man-(1-&gt;3)-[alpha-D-Man-(1-&gt;2)-alpha-D-Man-(1-&gt;3)-[alpha-D-Man-(1-&gt;2)-alpha-D-Man-(1-&gt;6)]-alpha-D-Man-(1-&gt;6)]-beta-D-Man-(1-&gt;4)-beta-D-GlcNAc-(1-&gt;4)-alpha-D-GlcNAc-diphospho-di-trans,poly-cis-dolichol + a di-trans,poly-cis-dolichyl phosphate + H(+). Its pathway is protein modification; protein glycosylation. Its function is as follows. Dol-P-Glc:Glc(2)Man(9)GlcNAc(2)-PP-Dol alpha-1,2-glucosyltransferase that operates in the biosynthetic pathway of dolichol-linked oligosaccharides, the glycan precursors employed in protein asparagine (N)-glycosylation. The assembly of dolichol-linked oligosaccharides begins on the cytosolic side of the endoplasmic reticulum membrane and finishes in its lumen. The sequential addition of sugars to dolichol pyrophosphate produces dolichol-linked oligosaccharides containing fourteen sugars, including two GlcNAcs, nine mannoses and three glucoses. Once assembled, the oligosaccharide is transferred from the lipid to nascent proteins by oligosaccharyltransferases. In the lumen of the endoplasmic reticulum, adds the third and last glucose residue from dolichyl phosphate glucose (Dol-P-Glc) onto the lipid-linked oligosaccharide intermediate Glc(2)Man(9)GlcNAc(2)-PP-Dol to produce Glc(3)Man(9)GlcNAc(2)-PP-Dol. In Homo sapiens (Human), this protein is Dol-P-Glc:Glc(2)Man(9)GlcNAc(2)-PP-Dol alpha-1,2-glucosyltransferase.